The following is an 87-amino-acid chain: Small ribosomal subunit protein uS15 (87 aa).

This sequence belongs to the universal ribosomal protein uS15 family. In terms of assembly, part of the 30S ribosomal subunit. Forms a bridge to the 50S subunit in the 70S ribosome, contacting the 23S rRNA.

Its function is as follows. One of the primary rRNA binding proteins, it binds directly to 16S rRNA where it helps nucleate assembly of the platform of the 30S subunit by binding and bridging several RNA helices of the 16S rRNA. In terms of biological role, forms an intersubunit bridge (bridge B4) with the 23S rRNA of the 50S subunit in the ribosome. This Dehalococcoides mccartyi (strain ATCC BAA-2266 / KCTC 15142 / 195) (Dehalococcoides ethenogenes (strain 195)) protein is Small ribosomal subunit protein uS15.